The sequence spans 297 residues: Phosphoribosylaminoimidazole-succinocarboxamide synthase (297 aa).

Belongs to the SAICAR synthetase family.

It catalyses the reaction 5-amino-1-(5-phospho-D-ribosyl)imidazole-4-carboxylate + L-aspartate + ATP = (2S)-2-[5-amino-1-(5-phospho-beta-D-ribosyl)imidazole-4-carboxamido]succinate + ADP + phosphate + 2 H(+). It functions in the pathway purine metabolism; IMP biosynthesis via de novo pathway; 5-amino-1-(5-phospho-D-ribosyl)imidazole-4-carboxamide from 5-amino-1-(5-phospho-D-ribosyl)imidazole-4-carboxylate: step 1/2. The polypeptide is Phosphoribosylaminoimidazole-succinocarboxamide synthase (Saccharopolyspora erythraea (strain ATCC 11635 / DSM 40517 / JCM 4748 / NBRC 13426 / NCIMB 8594 / NRRL 2338)).